The chain runs to 242 residues: Small ribosomal subunit protein uS2 (242 aa).

It belongs to the universal ribosomal protein uS2 family.

In Vibrio parahaemolyticus serotype O3:K6 (strain RIMD 2210633), this protein is Small ribosomal subunit protein uS2.